Reading from the N-terminus, the 896-residue chain is Zinc finger protein 574 (896 aa).

3 consecutive C2H2-type zinc fingers follow at residues Tyr16–His38, Tyr76–His98, and Tyr126–His148. Ser164 is modified (phosphoserine). The segment at Tyr214–His236 adopts a C2H2-type 4 zinc-finger fold. Over residues Val259–Ser272 the composition is skewed to low complexity. The tract at residues Val259–Gly303 is disordered. Residues His274–Asp287 are compositionally biased toward basic and acidic residues. Ser298 is modified (phosphoserine). C2H2-type zinc fingers lie at residues Leu309 to His331, Phe336 to His358, Phe364 to His386, and His392 to His413. The interval Phe434–Pro460 is disordered. C2H2-type zinc fingers lie at residues Tyr466–His489, His495–His517, Phe523–His545, Tyr551–His573, Tyr579–His601, and Tyr607–His630. A C2H2-type 15; degenerate zinc finger spans residues His636–Ala659. Residues Phe667–His689 form a C2H2-type 16 zinc finger. The tract at residues Ala687–Ala733 is disordered. Residues Ala707–Pro732 are compositionally biased toward low complexity. A Phosphoserine modification is found at Ser717. C2H2-type zinc fingers lie at residues Leu738–His760, Tyr766–His788, Phe794–His816, and Tyr822–His844. Arg832 carries the post-translational modification Asymmetric dimethylarginine.

This sequence belongs to the krueppel C2H2-type zinc-finger protein family.

The protein resides in the nucleus. In terms of biological role, may be involved in transcriptional regulation. The polypeptide is Zinc finger protein 574 (ZNF574) (Bos taurus (Bovine)).